A 104-amino-acid chain; its full sequence is Nucleoid-associated protein Dtur_0258 (104 aa).

Residues 84–104 form a disordered region; it reads EKSAEKMGSLTDGLPLPPGLF.

The protein belongs to the YbaB/EbfC family. As to quaternary structure, homodimer.

Its subcellular location is the cytoplasm. It is found in the nucleoid. Its function is as follows. Binds to DNA and alters its conformation. May be involved in regulation of gene expression, nucleoid organization and DNA protection. The sequence is that of Nucleoid-associated protein Dtur_0258 from Dictyoglomus turgidum (strain DSM 6724 / Z-1310).